The sequence spans 170 residues: Urease accessory protein UreE (170 aa).

Residues 137–170 (PFDPESGAYAHAGREQSHAHSHEHSHADGHTHAH) are disordered. Positions 148–170 (AGREQSHAHSHEHSHADGHTHAH) are enriched in basic and acidic residues.

It belongs to the UreE family.

It is found in the cytoplasm. Involved in urease metallocenter assembly. Binds nickel. Probably functions as a nickel donor during metallocenter assembly. The protein is Urease accessory protein UreE of Pseudoalteromonas translucida (strain TAC 125).